Here is a 320-residue protein sequence, read N- to C-terminus: Lipoyl synthase (320 aa).

Residues Cys-67, Cys-72, Cys-78, Cys-93, Cys-97, Cys-100, and Ser-307 each coordinate [4Fe-4S] cluster. Residues 79 to 296 (FNHGTATFMI…RDKANEMGFE (218 aa)) enclose the Radical SAM core domain.

The protein belongs to the radical SAM superfamily. Lipoyl synthase family. [4Fe-4S] cluster is required as a cofactor.

The protein localises to the cytoplasm. The catalysed reaction is [[Fe-S] cluster scaffold protein carrying a second [4Fe-4S](2+) cluster] + N(6)-octanoyl-L-lysyl-[protein] + 2 oxidized [2Fe-2S]-[ferredoxin] + 2 S-adenosyl-L-methionine + 4 H(+) = [[Fe-S] cluster scaffold protein] + N(6)-[(R)-dihydrolipoyl]-L-lysyl-[protein] + 4 Fe(3+) + 2 hydrogen sulfide + 2 5'-deoxyadenosine + 2 L-methionine + 2 reduced [2Fe-2S]-[ferredoxin]. It participates in protein modification; protein lipoylation via endogenous pathway; protein N(6)-(lipoyl)lysine from octanoyl-[acyl-carrier-protein]: step 2/2. Functionally, catalyzes the radical-mediated insertion of two sulfur atoms into the C-6 and C-8 positions of the octanoyl moiety bound to the lipoyl domains of lipoate-dependent enzymes, thereby converting the octanoylated domains into lipoylated derivatives. The protein is Lipoyl synthase of Haemophilus influenzae (strain 86-028NP).